A 321-amino-acid chain; its full sequence is Leucine-rich repeat-containing protein 46 (321 aa).

4 LRR repeats span residues 45–66 (ELQTVRLDREGITTIRNLEGLQ), 67–88 (NLHSLYLQGNKIQQIENLACIP), 89–110 (SLRFLSLAGNQIRQVENLLDLP), and 111–132 (CLQFLDLSENLIETLKLDEFPQ). Positions 142-184 (NSCTNQDGYRELVTEALPLLLDLDGQPVVERWISDEEDEASSD) constitute an LRRCT domain. Phosphoserine occurs at positions 175 and 182. The stretch at 201–221 (LKELEQELSRHREHRQQTALT) forms a coiled coil. The tract at residues 235 to 321 (DLPLLPGVPM…TKTTAKRSKK (87 aa)) is disordered.

It localises to the cell projection. The protein resides in the cilium. Its subcellular location is the flagellum. Its function is as follows. Required for normal spermatogenesis and male fertility. Plays an important role in sperm flagellum biogenesis. The chain is Leucine-rich repeat-containing protein 46 (LRRC46) from Homo sapiens (Human).